Consider the following 68-residue polypeptide: Bacteriocin lactococcin-B (68 aa).

A propeptide spanning residues 1-21 (MKNQLNFNIVSDEELAEVNGG) is cleaved from the precursor.

It localises to the secreted. Kills Lactococci by dissipating the membrane potential of the cells. The polypeptide is Bacteriocin lactococcin-B (lcnB) (Lactococcus lactis subsp. cremoris (Streptococcus cremoris)).